The primary structure comprises 68 residues: Large ribosomal subunit protein uL30 (68 aa).

This sequence belongs to the universal ribosomal protein uL30 family. In terms of assembly, part of the 50S ribosomal subunit.

This chain is Large ribosomal subunit protein uL30, found in Bartonella quintana (strain Toulouse) (Rochalimaea quintana).